Consider the following 191-residue polypeptide: Nucleoside triphosphate pyrophosphatase (191 aa).

Residue D70 is the Proton acceptor of the active site.

It belongs to the Maf family. The cofactor is a divalent metal cation.

Its subcellular location is the cytoplasm. The enzyme catalyses a ribonucleoside 5'-triphosphate + H2O = a ribonucleoside 5'-phosphate + diphosphate + H(+). It carries out the reaction a 2'-deoxyribonucleoside 5'-triphosphate + H2O = a 2'-deoxyribonucleoside 5'-phosphate + diphosphate + H(+). Its function is as follows. Nucleoside triphosphate pyrophosphatase. May have a dual role in cell division arrest and in preventing the incorporation of modified nucleotides into cellular nucleic acids. The sequence is that of Nucleoside triphosphate pyrophosphatase from Synechococcus sp. (strain WH7803).